The primary structure comprises 238 residues: Uridylate kinase (238 aa).

10-13 (KFSG) is a binding site for ATP. The tract at residues 18–23 (GDSGFG) is involved in allosteric activation by GTP. Position 52 (G52) interacts with UMP. Residues G53 and R57 each coordinate ATP. UMP is bound by residues D73 and 134–141 (TGNPFFTT). ATP is bound by residues T161, Y167, and D170.

This sequence belongs to the UMP kinase family. In terms of assembly, homohexamer.

It is found in the cytoplasm. The catalysed reaction is UMP + ATP = UDP + ADP. Its pathway is pyrimidine metabolism; CTP biosynthesis via de novo pathway; UDP from UMP (UMPK route): step 1/1. Its activity is regulated as follows. Allosterically activated by GTP. Inhibited by UTP. Catalyzes the reversible phosphorylation of UMP to UDP. The chain is Uridylate kinase from Campylobacter curvus (strain 525.92).